The following is a 369-amino-acid chain: Cytochrome P450 monooxygenase apf8 (369 aa).

Cysteine 303 serves as a coordination point for heme.

It belongs to the cytochrome P450 family. Requires heme as cofactor.

It participates in secondary metabolite biosynthesis. Cytochrome P450 monooxygenase; part of the gene cluster that mediates the biosynthesis of the cyclic tetrapeptide apicidin F (APF). The non-ribosomal peptide synthetase apf1 incorporates four different amino acids to produce apicidin F: L-phenylalanine, D-pipecolic acid (D-pip), N-methoxy-L-tryptophan and L-2-aminooctanedioic acid. L-Phenylalanine is the only proteinogenic amino acid directly used by apf1. The 3 other apf1 substrates are non-proteinogenic and have to be modified by other enzymes of the cluster. Lysine is converted to delta-1-pyrroline-5-carboxylate (P5C) which is reduced to L-pipecolic acid (L-pip) by apf3. L-pip is epimerized to D-pip, probably by apf1 activity, prior to incorporation. L-Tryptophan is N-oxidyzed by one of the cytochrome P450 monooxygenases (apf7 or apf8), and further methylated at the hydroxy group by the O-methyltransferase apf6 to yield N-methoxy-L-tryptophan. The synthesis of the fourth apf1 substrate is more complex. The fatty acid synthase apf5 is involved in the synthesis of the octanoic acid backbone of L-2-aminooctanedioic acid by fixing one acetyl-CoA unit and three malonyl-CoA units. Then one of the cytochrome P450 monooxygenases (apf7 or apf8) may oxidize this backbone to 2-oxooctanoic acid. The aminotransferase apf4 is predicted to catalyze the exchange of the keto group with an amino group. The next step would be the oxidation of 2-aminooctanoic acid by one of the cytochrome P450 monooxygenases (apf7 or apf8). The last step is the oxidation of 2-amino-8-hydroxyoctanoic acid to 2-aminooctanedioic acid is catalyzed by the FAD-dependent monooxygenase apf9. In Gibberella fujikuroi (strain CBS 195.34 / IMI 58289 / NRRL A-6831) (Bakanae and foot rot disease fungus), this protein is Cytochrome P450 monooxygenase apf8.